Consider the following 456-residue polypeptide: Toxin CfTX-1 (456 aa).

Positions 1 to 20 are cleaved as a signal peptide; the sequence is MVKMLFFAFLPLLFMTGIAA.

This sequence belongs to the jellyfish toxin family. Type I subfamily. Oligomer. Contains disulfide bonds. As to expression, nematocytes.

It localises to the secreted. It is found in the nematocyst. The protein localises to the target cell membrane. In terms of biological role, may cause profound effects on the cardiovascular system of anesthetized rats (at 25 ug/kg), since the fraction containing this toxin and CfTX-2 produces an initial increase in mean arterial pressure, followed by cardiovascular collapse in all animals within 1 minute of injection. To note, the same fraction does not induce significant change in heart rate. Has weak hemolytic activity. Is lethal to crayfish. Causes cutaneous inflammation in humans. May act as a pore-forming toxin, disrupting normal transmembrane ion concentration gradients in susceptible cells. This chain is Toxin CfTX-1, found in Chironex fleckeri (Australian box jellyfish).